Here is a 93-residue protein sequence, read N- to C-terminus: Cell division protein CrgA (93 aa).

2 helical membrane passes run V31–F51 and L70–M90.

The protein belongs to the CrgA family.

The protein localises to the cell membrane. In terms of biological role, involved in cell division. The protein is Cell division protein CrgA of Mycobacterium bovis (strain ATCC BAA-935 / AF2122/97).